We begin with the raw amino-acid sequence, 724 residues long: Ribosomal RNA large subunit methyltransferase K/L (724 aa).

The region spanning 42-153 (DAQRLVLWSR…KGRATLSVDL (112 aa)) is the THUMP domain.

It belongs to the methyltransferase superfamily. RlmKL family.

It localises to the cytoplasm. It catalyses the reaction guanosine(2445) in 23S rRNA + S-adenosyl-L-methionine = N(2)-methylguanosine(2445) in 23S rRNA + S-adenosyl-L-homocysteine + H(+). It carries out the reaction guanosine(2069) in 23S rRNA + S-adenosyl-L-methionine = N(2)-methylguanosine(2069) in 23S rRNA + S-adenosyl-L-homocysteine + H(+). In terms of biological role, specifically methylates the guanine in position 2445 (m2G2445) and the guanine in position 2069 (m7G2069) of 23S rRNA. In Xylella fastidiosa (strain M12), this protein is Ribosomal RNA large subunit methyltransferase K/L.